A 214-amino-acid polypeptide reads, in one-letter code: NADH-ubiquinone oxidoreductase chain 5 (214 aa).

4 helical membrane passes run 14–34 (LNTW…TYSI), 58–78 (PLIT…GMII), 92–112 (MPLI…ILAL), and 192–212 (TGLI…MILM).

Belongs to the complex I subunit 5 family.

The protein resides in the mitochondrion inner membrane. It carries out the reaction a ubiquinone + NADH + 5 H(+)(in) = a ubiquinol + NAD(+) + 4 H(+)(out). In terms of biological role, core subunit of the mitochondrial membrane respiratory chain NADH dehydrogenase (Complex I) that is believed to belong to the minimal assembly required for catalysis. Complex I functions in the transfer of electrons from NADH to the respiratory chain. The immediate electron acceptor for the enzyme is believed to be ubiquinone. In Anser caerulescens (Snow goose), this protein is NADH-ubiquinone oxidoreductase chain 5 (MT-ND5).